Consider the following 81-residue polypeptide: Arminin 2a (81 aa).

The signal sequence occupies residues methionine 1 to alanine 18. The propeptide occupies arginine 19–alanine 57. Alanine amide is present on alanine 78.

Belongs to the arminin family. In terms of tissue distribution, expressed in entodermal epithelium along the body column.

It is found in the secreted. The protein localises to the target cell membrane. In terms of biological role, antimicrobial peptide with a broad-spectrum antimicrobial activity. Keeps its antibacterial activity under a wide range of salt concentrations that mimic physiological conditions of human blood, which is surprising, since Hydra is an obligate freshwater animal with nearly no salt tolerance. Does not affect red blood cells. The polypeptide is Arminin 2a (Hydra vulgaris (Hydra)).